A 544-amino-acid polypeptide reads, in one-letter code: Chromosomal replication initiator protein DnaA (544 aa).

Positions 1–71 (MNDFWQHCSA…ADMARDFWHT (71 aa)) are domain I, interacts with DnaA modulators. The domain II stretch occupies residues 71 to 207 (TPIDVQFVLD…GETDSMYERS (137 aa)). Over residues 90–105 (AAAPAPASARPASAPG) the composition is skewed to low complexity. Disordered regions lie at residues 90 to 111 (AAAPAPASARPASAPGSMGGSA) and 180 to 203 (AAARRTWRPGQSAGSNGNGETDSM). Polar residues predominate over residues 191–200 (SAGSNGNGET). The interval 208-424 (KLNPVLTFDN…GALRKILAYS (217 aa)) is domain III, AAA+ region. Residues glycine 252, glycine 254, lysine 255, and threonine 256 each contribute to the ATP site. The segment at 425-544 (KFHGREITIE…LHVLEQTLKG (120 aa)) is domain IV, binds dsDNA.

This sequence belongs to the DnaA family. Oligomerizes as a right-handed, spiral filament on DNA at oriC.

It is found in the cytoplasm. Plays an essential role in the initiation and regulation of chromosomal replication. ATP-DnaA binds to the origin of replication (oriC) to initiate formation of the DNA replication initiation complex once per cell cycle. Binds the DnaA box (a 9 base pair repeat at the origin) and separates the double-stranded (ds)DNA. Forms a right-handed helical filament on oriC DNA; dsDNA binds to the exterior of the filament while single-stranded (ss)DNA is stabiized in the filament's interior. The ATP-DnaA-oriC complex binds and stabilizes one strand of the AT-rich DNA unwinding element (DUE), permitting loading of DNA polymerase. After initiation quickly degrades to an ADP-DnaA complex that is not apt for DNA replication. Binds acidic phospholipids. This chain is Chromosomal replication initiator protein DnaA, found in Paraburkholderia xenovorans (strain LB400).